Here is a 317-residue protein sequence, read N- to C-terminus: MALATGLSPAMFIDLERDAWRALRAATPLPLKSEDIDGLRGLGEHLDLDEVVDVYLPLSRLLNLQVAAAQRLWAEQQAFLGGSTQKVPYIIAIAGSVAVGKSTTARILQALLKRWPDHPRVELVTTDGFLFPNDVLTERDLMKRKGFPESYDRRALVRFLAELKAGRAEVAAPVYSHLVYDVVPGEAQVVRQPDILILEGLNVLQAGAQEGKQMPATFLSDFFDFSIYVDAHEHDIRRWYVNRFLKLQQTAFRDERSYFRRFSELNHEQAIQLAESVWGEINGPNLAQNIAPTRSRARLILLKGPDHKVKRVRLRKL.

Residue 95 to 102 (GSVAVGKS) participates in ATP binding.

It belongs to the prokaryotic pantothenate kinase family.

It localises to the cytoplasm. The catalysed reaction is (R)-pantothenate + ATP = (R)-4'-phosphopantothenate + ADP + H(+). Its pathway is cofactor biosynthesis; coenzyme A biosynthesis; CoA from (R)-pantothenate: step 1/5. This chain is Pantothenate kinase, found in Myxococcus xanthus (strain DK1622).